A 501-amino-acid chain; its full sequence is Aldehyde dehydrogenase 1A1 (501 aa).

Ser2 carries the post-translational modification N-acetylserine. An N6-acetyllysine mark is found at Lys91 and Lys128. NAD(+)-binding positions include 167 to 170 (LPWN), 193 to 196 (KPAE), 226 to 227 (GP), and 246 to 247 (GS). Lys252 is subject to N6-acetyllysine. Catalysis depends on Glu269, which acts as the Proton acceptor. 269–271 (ELG) contributes to the NAD(+) binding site. Cys303 functions as the Nucleophile in the catalytic mechanism. The interval 336 to 501 (LTPGVSQGPQ…VTVKISQKNS (166 aa)) is mediates interaction with PRMT3. Thr337 carries the phosphothreonine modification. Residue 349-353 (EQYDK) coordinates NAD(+). Lys353 and Lys367 each carry N6-acetyllysine. Residue 400-402 (EIF) coordinates NAD(+). Position 410 is an N6-acetyllysine (Lys410). Ser413 bears the Phosphoserine mark. An N6-acetyllysine mark is found at Lys419, Lys435, and Lys495.

Belongs to the aldehyde dehydrogenase family. Homotetramer. Interacts with PRMT3; the interaction is direct, inhibits ALDH1A1 aldehyde dehydrogenase activity and is independent of the methyltransferase activity of PRMT3. In terms of processing, the N-terminus is blocked most probably by acetylation.

The protein resides in the cytoplasm. It is found in the cytosol. It localises to the cell projection. The protein localises to the axon. The enzyme catalyses an aldehyde + NAD(+) + H2O = a carboxylate + NADH + 2 H(+). The catalysed reaction is all-trans-retinal + NAD(+) + H2O = all-trans-retinoate + NADH + 2 H(+). It catalyses the reaction 9-cis-retinal + NAD(+) + H2O = 9-cis-retinoate + NADH + 2 H(+). It carries out the reaction 11-cis-retinal + NAD(+) + H2O = 11-cis-retinoate + NADH + 2 H(+). The enzyme catalyses 13-cis-retinal + NAD(+) + H2O = 13-cis-retinoate + NADH + 2 H(+). The catalysed reaction is 3-deoxyglucosone + NAD(+) + H2O = 2-dehydro-3-deoxy-D-gluconate + NADH + 2 H(+). It catalyses the reaction (E)-4-hydroxynon-2-enal + NAD(+) + H2O = (E)-4-hydroxynon-2-enoate + NADH + 2 H(+). It carries out the reaction malonaldehyde + NAD(+) + H2O = 3-oxopropanoate + NADH + 2 H(+). The enzyme catalyses hexanal + NAD(+) + H2O = hexanoate + NADH + 2 H(+). The catalysed reaction is propanal + NAD(+) + H2O = propanoate + NADH + 2 H(+). It catalyses the reaction acetaldehyde + NAD(+) + H2O = acetate + NADH + 2 H(+). It carries out the reaction benzaldehyde + NAD(+) + H2O = benzoate + NADH + 2 H(+). The enzyme catalyses 4-aminobutanal + NAD(+) + H2O = 4-aminobutanoate + NADH + 2 H(+). It participates in cofactor metabolism; retinol metabolism. Its function is as follows. Cytosolic dehydrogenase that catalyzes the irreversible oxidation of a wide range of aldehydes to their corresponding carboxylic acid. Functions downstream of retinol dehydrogenases and catalyzes the oxidation of retinaldehyde into retinoic acid, the second step in the oxidation of retinol/vitamin A into retinoic acid. This pathway is crucial to control the levels of retinol and retinoic acid, two important molecules which excess can be teratogenic and cytotoxic. Also oxidizes aldehydes resulting from lipid peroxidation like (E)-4-hydroxynon-2-enal/HNE, malonaldehyde and hexanal that form protein adducts and are highly cytotoxic. By participating for instance to the clearance of (E)-4-hydroxynon-2-enal/HNE in the lens epithelium prevents the formation of HNE-protein adducts and lens opacification. Also functions downstream of fructosamine-3-kinase in the fructosamine degradation pathway by catalyzing the oxidation of 3-deoxyglucosone, the carbohydrate product of fructosamine 3-phosphate decomposition, which is itself a potent glycating agent that may react with lysine and arginine side-chains of proteins. Also has an aminobutyraldehyde dehydrogenase activity and is probably part of an alternative pathway for the biosynthesis of GABA/4-aminobutanoate in midbrain, thereby playing a role in GABAergic synaptic transmission. This chain is Aldehyde dehydrogenase 1A1, found in Equus caballus (Horse).